The sequence spans 881 residues: Valine--tRNA ligase (881 aa).

Residues 49-59 (PNVTGKLHLGH) carry the 'HIGH' region motif. The 'KMSKS' region signature appears at 526–530 (KMSKS). Residue Lys529 participates in ATP binding. The stretch at 810–881 (LADLINLDEE…VRQRLADLEK (72 aa)) forms a coiled coil.

The protein belongs to the class-I aminoacyl-tRNA synthetase family. ValS type 1 subfamily. As to quaternary structure, monomer.

Its subcellular location is the cytoplasm. It catalyses the reaction tRNA(Val) + L-valine + ATP = L-valyl-tRNA(Val) + AMP + diphosphate. Functionally, catalyzes the attachment of valine to tRNA(Val). As ValRS can inadvertently accommodate and process structurally similar amino acids such as threonine, to avoid such errors, it has a 'posttransfer' editing activity that hydrolyzes mischarged Thr-tRNA(Val) in a tRNA-dependent manner. This chain is Valine--tRNA ligase, found in Bacillus thuringiensis subsp. konkukian (strain 97-27).